The sequence spans 393 residues: BEN domain-containing protein 5 (393 aa).

Positions 169 to 212 (RVLYEELLRSYQQQQQEMKHIQHELERTRKQLVQQAKKLKDYGS) form a coiled coil. One can recognise a BEN domain in the interval 274–380 (GSGVWVNEEK…EKIMDINKSC (107 aa)).

Its function is as follows. May act as a transcriptional repressor. This is BEN domain-containing protein 5 (bend5) from Xenopus laevis (African clawed frog).